The following is a 232-amino-acid chain: Small ribosomal subunit protein uS2 (232 aa).

It belongs to the universal ribosomal protein uS2 family.

This is Small ribosomal subunit protein uS2 from Natranaerobius thermophilus (strain ATCC BAA-1301 / DSM 18059 / JW/NM-WN-LF).